Here is a 241-residue protein sequence, read N- to C-terminus: tRNA pseudouridine synthase A (241 aa).

Aspartate 52 functions as the Nucleophile in the catalytic mechanism. Substrate is bound at residue tyrosine 111.

It belongs to the tRNA pseudouridine synthase TruA family. As to quaternary structure, homodimer.

It catalyses the reaction uridine(38/39/40) in tRNA = pseudouridine(38/39/40) in tRNA. In terms of biological role, formation of pseudouridine at positions 38, 39 and 40 in the anticodon stem and loop of transfer RNAs. The sequence is that of tRNA pseudouridine synthase A from Ureaplasma urealyticum serovar 10 (strain ATCC 33699 / Western).